A 454-amino-acid polypeptide reads, in one-letter code: PC-esterase domain-containing protein 1A (454 aa).

The protein belongs to the PC-esterase family.

This is PC-esterase domain-containing protein 1A (PCED1A) from Homo sapiens (Human).